The following is a 148-amino-acid chain: Arginine repressor (148 aa).

This sequence belongs to the ArgR family.

The protein localises to the cytoplasm. Its pathway is amino-acid biosynthesis; L-arginine biosynthesis [regulation]. In terms of biological role, regulates arginine biosynthesis genes. The chain is Arginine repressor from Chlorobium chlorochromatii (strain CaD3).